Consider the following 679-residue polypeptide: Altered inheritance of mitochondria protein 21 (679 aa).

Positions 1-95 are disordered; it reads MPSEVTPKVP…EELNNVMNNT (95 aa). Over residues 9–19 the composition is skewed to basic and acidic residues; it reads VPERPSRRKTS. T18 bears the Phosphothreonine mark. Residue S36 is modified to Phosphoserine. T58 bears the Phosphothreonine mark. S70 carries the post-translational modification Phosphoserine. T85 is modified (phosphothreonine). A compositionally biased stretch (polar residues) spans 86 to 95; sequence EELNNVMNNT. At S104 the chain carries Phosphoserine. 2 disordered regions span residues 107 to 522 and 548 to 679; these read SKHN…EKIE and LMDT…FHSL. The span at 109 to 119 shows a compositional bias: basic residues; sequence HNIHSVSRKKS. Polar residues-rich tracts occupy residues 133-149 and 164-178; these read QNGQRSASDNKTSTNPS and SAISPSNSVNKSNNE. Residues 179-213 are compositionally biased toward basic and acidic residues; that stretch reads VTEHSDSEDLTEKQKVHAALDNEAGDGSHFEEKLI. S183, S206, and S231 each carry phosphoserine. The span at 243–272 shows a compositional bias: basic and acidic residues; that stretch reads SDDKAEKFTKHPESSLEELQKHQEQQEEKI. At T277 the chain carries Phosphothreonine. S284 carries the phosphoserine modification. Positions 296–323 are enriched in polar residues; it reads EVNSQPQGPSDTETVIAATSSNVPSQIA. S324 carries the phosphoserine modification. Basic and acidic residues-rich tracts occupy residues 339–351 and 372–383; these read KKDFEAHVQKEEL and EESKIPKIPSER. The interval 383-396 is interaction with SH3 domain of ABP1; that stretch reads RPKRRAPPPVPKKP. 2 stretches are compositionally biased toward polar residues: residues 414–427 and 437–452; these read DLHNNGNSSATTAS and SSITSDTTKADFTSKL. Positions 471 to 482 are enriched in basic and acidic residues; it reads LEKKLSSPDTES. Positions 483–492 are enriched in polar residues; the sequence is KLGTQDQSQA. Over residues 501-512 the composition is skewed to basic residues; that stretch reads RRGRGPRGRKLP. T552 carries the post-translational modification Phosphothreonine. The segment covering 556–576 has biased composition (basic and acidic residues); sequence QAERALDEKSKSIPEEQREQS. Phosphoserine is present on S576. Positions 603–613 are enriched in polar residues; the sequence is PLSQLPQTNAV. S620, S623, S625, S627, S667, S671, S675, and S678 each carry phosphoserine. The span at 667 to 679 shows a compositional bias: basic and acidic residues; sequence SALHSEEASFHSL.

Belongs to the AIM21 family. In terms of assembly, interacts with ribosomes. Interacts with ABP1.

It is found in the cytoplasm. It localises to the cytoskeleton. The protein localises to the actin patch. Involved in mitochondrial migration along actin filaments. This chain is Altered inheritance of mitochondria protein 21 (AIM21), found in Saccharomyces cerevisiae (strain YJM789) (Baker's yeast).